The chain runs to 424 residues: Histidine--tRNA ligase (424 aa).

Belongs to the class-II aminoacyl-tRNA synthetase family. As to quaternary structure, homodimer.

The protein resides in the cytoplasm. It catalyses the reaction tRNA(His) + L-histidine + ATP = L-histidyl-tRNA(His) + AMP + diphosphate + H(+). This is Histidine--tRNA ligase from Salmonella agona (strain SL483).